The chain runs to 157 residues: Ribonuclease H (157 aa).

One can recognise an RNase H type-1 domain in the interval 2 to 145 (NAEISKIYTD…CDAIARAFAA (144 aa)). Mg(2+) is bound by residues Asp-11, Glu-50, Asp-74, and Asp-137.

It belongs to the RNase H family. As to quaternary structure, monomer. Requires Mg(2+) as cofactor.

It is found in the cytoplasm. It catalyses the reaction Endonucleolytic cleavage to 5'-phosphomonoester.. Its function is as follows. Endonuclease that specifically degrades the RNA of RNA-DNA hybrids. This is Ribonuclease H from Cyanothece sp. (strain PCC 7425 / ATCC 29141).